The sequence spans 154 residues: Large ribosomal subunit protein uL30 (154 aa).

It belongs to the universal ribosomal protein uL30 family. In terms of assembly, part of the 50S ribosomal subunit.

In Methanococcus maripaludis (strain C5 / ATCC BAA-1333), this protein is Large ribosomal subunit protein uL30.